Here is a 188-residue protein sequence, read N- to C-terminus: MPVAETSQGTSGVAERYASSLFELALEAGTVEAVQVELDKFGALLDESDDLKRLVASPVFSAEDQFKAISAICEKAGIAGLAVNFLKVVANNRRLFAVPGMIRAYRTIAAAHRGEITAEVTSAHALDEAQETELKAALKSVTGKDVAISVTVDPSILGGLIVKVGSRQIDTSLRTKLSTLKLALKEVG.

The protein belongs to the ATPase delta chain family. In terms of assembly, F-type ATPases have 2 components, F(1) - the catalytic core - and F(0) - the membrane proton channel. F(1) has five subunits: alpha(3), beta(3), gamma(1), delta(1), epsilon(1). F(0) has three main subunits: a(1), b(2) and c(10-14). The alpha and beta chains form an alternating ring which encloses part of the gamma chain. F(1) is attached to F(0) by a central stalk formed by the gamma and epsilon chains, while a peripheral stalk is formed by the delta and b chains.

Its subcellular location is the cell inner membrane. Functionally, f(1)F(0) ATP synthase produces ATP from ADP in the presence of a proton or sodium gradient. F-type ATPases consist of two structural domains, F(1) containing the extramembraneous catalytic core and F(0) containing the membrane proton channel, linked together by a central stalk and a peripheral stalk. During catalysis, ATP synthesis in the catalytic domain of F(1) is coupled via a rotary mechanism of the central stalk subunits to proton translocation. In terms of biological role, this protein is part of the stalk that links CF(0) to CF(1). It either transmits conformational changes from CF(0) to CF(1) or is implicated in proton conduction. In Agrobacterium fabrum (strain C58 / ATCC 33970) (Agrobacterium tumefaciens (strain C58)), this protein is ATP synthase subunit delta.